A 399-amino-acid polypeptide reads, in one-letter code: RNA polymerase sigma factor SigA1 (399 aa).

The disordered stretch occupies residues 1–73 (MTQLISIDKE…DEDSVGEDED (73 aa)). The segment covering 60–73 (DAIDDEDSVGEDED) has biased composition (acidic residues). Positions 167–237 (MVQSNLRLVV…TRAIADQSRT (71 aa)) are sigma-70 factor domain-2. Positions 191–194 (DLIQ) match the Interaction with polymerase core subunit RpoC motif. Residues 246 to 321 (ETISRIKKTT…EADGETPEDE (76 aa)) form a sigma-70 factor domain-3 region. A sigma-70 factor domain-4 region spans residues 334–387 (VLSTLSPRERDVLRLRYGLDDGRMKTLEEIGQLFNVTRERIRQIEAKALRKLRH). Positions 360–379 (LEEIGQLFNVTRERIRQIEA) form a DNA-binding region, H-T-H motif.

The protein belongs to the sigma-70 factor family. RpoD/SigA subfamily. In terms of assembly, interacts transiently with the RNA polymerase catalytic core.

The protein resides in the cytoplasm. Sigma factors are initiation factors that promote the attachment of RNA polymerase to specific initiation sites and are then released. This sigma factor is the primary sigma factor during exponential growth. This Synechococcus elongatus (strain ATCC 33912 / PCC 7942 / FACHB-805) (Anacystis nidulans R2) protein is RNA polymerase sigma factor SigA1.